A 199-amino-acid polypeptide reads, in one-letter code: Protein Maeo_0138 (199 aa).

The AMMECR1 domain maps to 7 to 197 (EEGKFAVKFA…ELSPNGKIVE (191 aa)).

The chain is Protein Maeo_0138 from Methanococcus aeolicus (strain ATCC BAA-1280 / DSM 17508 / OCM 812 / Nankai-3).